The following is a 283-amino-acid chain: ATP synthase gamma chain (283 aa).

This sequence belongs to the ATPase gamma chain family. As to quaternary structure, F-type ATPases have 2 components, CF(1) - the catalytic core - and CF(0) - the membrane proton channel. CF(1) has five subunits: alpha(3), beta(3), gamma(1), delta(1), epsilon(1). CF(0) has three main subunits: a, b and c.

It localises to the cell membrane. Functionally, produces ATP from ADP in the presence of a proton gradient across the membrane. The gamma chain is believed to be important in regulating ATPase activity and the flow of protons through the CF(0) complex. The sequence is that of ATP synthase gamma chain from Clostridium perfringens (strain ATCC 13124 / DSM 756 / JCM 1290 / NCIMB 6125 / NCTC 8237 / Type A).